Consider the following 83-residue polypeptide: Small ribosomal subunit protein bS16 (83 aa).

Belongs to the bacterial ribosomal protein bS16 family.

This is Small ribosomal subunit protein bS16 from Aromatoleum aromaticum (strain DSM 19018 / LMG 30748 / EbN1) (Azoarcus sp. (strain EbN1)).